Consider the following 103-residue polypeptide: Putative membrane protein insertion efficiency factor (103 aa).

The protein belongs to the UPF0161 family.

It is found in the cell inner membrane. Could be involved in insertion of integral membrane proteins into the membrane. This Chlamydia caviae (strain ATCC VR-813 / DSM 19441 / 03DC25 / GPIC) (Chlamydophila caviae) protein is Putative membrane protein insertion efficiency factor.